The following is a 126-amino-acid chain: Antimicrobial protein 1 (126 aa).

The signal sequence occupies residues 1–24 (MRSSLLLGLTVVLLLGVTVPPCMA).

As to expression, strongly expressed in gills, hemocytes and reproductive tract, with weaker expression in muscle, heart and digestive tract. Not detected in eyes and hepatopancreas (at protein level).

Its subcellular location is the secreted. Functionally, has antibacterial activity against the Gram-positive bacteria E.coli (MIC&lt;50 ug/ml) and P.aeruginosa (MIC&lt;25 ug/ml), and the Gram-negative bacteria S.aureus (MIC&lt;100 ug/ml) and S.pyogenes (MIC&lt;50 ug/ml). The chain is Antimicrobial protein 1 from Scylla serrata (Mud crab).